Reading from the N-terminus, the 499-residue chain is Centrosomal protein of 57 kDa (499 aa).

Residues 1–35 (MAAASVSETSASQFSNILAEPSKSNGSMVRHSSSP) are compositionally biased toward polar residues. The interval 1–58 (MAAASVSETSASQFSNILAEPSKSNGSMVRHSSSPYVVYPPDKPFLNSDLRRSPNKPT) is disordered. Position 53 is a phosphoserine (S53). The centrosome localization domain (CLD) stretch occupies residues 58 to 239 (TFAYPESNSR…KAAQLQTGLE (182 aa)). Residues 63–241 (ESNSRAIFSA…AQLQTGLEVN (179 aa)) are a coiled coil. Positions 277–490 (AVQPHYRLCL…KDMQSIQNSL (214 aa)) are mediates interaction with microtubules. Disordered regions lie at residues 334–357 (KQVS…SVNE) and 431–476 (KQKK…SRKN). The span at 346–357 (SATPPSSSSVNE) shows a compositional bias: low complexity. Residues 389 to 450 (TVELKDNLEC…KTLDEEGNSS (62 aa)) adopt a coiled-coil conformation. The span at 431–444 (KQKKELKATRKTLD) shows a compositional bias: basic and acidic residues. Residues 449–459 (SSSRSTTTGTT) show a composition bias toward low complexity. Over residues 460–474 (NKKDFAKPRPGEKSR) the composition is skewed to basic and acidic residues.

This sequence belongs to the translokin family. Homodimer and homooligomer. Interacts with FGF2 and RAP80. Does not interact with FGF1 or FGF2 isoform 24 kDa. Interacts with microtubules.

It localises to the nucleus. It is found in the cytoplasm. The protein resides in the cytoskeleton. Its subcellular location is the microtubule organizing center. The protein localises to the centrosome. Functionally, centrosomal protein which may be required for microtubule attachment to centrosomes. May act by forming ring-like structures around microtubules. Mediates nuclear translocation and mitogenic activity of the internalized growth factor FGF2. This is Centrosomal protein of 57 kDa (CEP57) from Bos taurus (Bovine).